Consider the following 525-residue polypeptide: GMP synthase [glutamine-hydrolyzing] (525 aa).

One can recognise a Glutamine amidotransferase type-1 domain in the interval 8–207; it reads KILILDFGSQ…ALDICGCKAN (200 aa). C85 (nucleophile) is an active-site residue. Catalysis depends on residues H181 and E183. The GMPS ATP-PPase domain maps to 208 to 400; it reads WKPSSIIEDA…LGLPYNMLYR (193 aa). An ATP-binding site is contributed by 235-241; sequence SGGVDSS.

Homodimer.

The catalysed reaction is XMP + L-glutamine + ATP + H2O = GMP + L-glutamate + AMP + diphosphate + 2 H(+). Its pathway is purine metabolism; GMP biosynthesis; GMP from XMP (L-Gln route): step 1/1. Catalyzes the synthesis of GMP from XMP. In Shewanella frigidimarina (strain NCIMB 400), this protein is GMP synthase [glutamine-hydrolyzing].